The sequence spans 248 residues: MRFDIVTLFPELFAPFLTSGITRRAFESGLVDVQLANPRDFAAGNYRRVDDRPFGGGPGMVMMAEPLAQCLKSIQSQRTEIAPVLLFSPAGQTLNHAMVQRWSDSQGAILICGRYEGLDQRFIDAYVTEQISLGDFVLSGGEIAAMALLDAVARLQPGVLNAADSHQQDSFNPVLDGLLDCPHYTRPENWLGRPVPEVLLSGHHVQIERWRREQRLALTLRLRPELIDQARRDGRLSRADEAFLASQV.

Residues Gly113 and 133–138 (LGDFVL) each bind S-adenosyl-L-methionine.

This sequence belongs to the RNA methyltransferase TrmD family. Homodimer.

The protein localises to the cytoplasm. The enzyme catalyses guanosine(37) in tRNA + S-adenosyl-L-methionine = N(1)-methylguanosine(37) in tRNA + S-adenosyl-L-homocysteine + H(+). In terms of biological role, specifically methylates guanosine-37 in various tRNAs. In Albidiferax ferrireducens (strain ATCC BAA-621 / DSM 15236 / T118) (Rhodoferax ferrireducens), this protein is tRNA (guanine-N(1)-)-methyltransferase.